The primary structure comprises 448 residues: Tubulin alpha-5 chain (448 aa).

The short motif at 1–4 (MREC) is the MREC motif element. Gln11 contributes to the GTP binding site. Lys40 carries the post-translational modification N6-acetyllysine. The GTP site is built by Glu71, Ser140, Gly144, Thr145, Thr179, Asn206, and Asn228. Residue Glu71 coordinates Mg(2+). Residue Glu254 is part of the active site.

This sequence belongs to the tubulin family. Dimer of alpha and beta chains. A typical microtubule is a hollow water-filled tube with an outer diameter of 25 nm and an inner diameter of 15 nM. Alpha-beta heterodimers associate head-to-tail to form protofilaments running lengthwise along the microtubule wall with the beta-tubulin subunit facing the microtubule plus end conferring a structural polarity. Microtubules usually have 13 protofilaments but different protofilament numbers can be found in some organisms and specialized cells. Mg(2+) serves as cofactor. In terms of processing, some glutamate residues at the C-terminus are polyglycylated, resulting in polyglycine chains on the gamma-carboxyl group. Glycylation is mainly limited to tubulin incorporated into axonemes (cilia and flagella) whereas glutamylation is prevalent in neuronal cells, centrioles, axonemes, and the mitotic spindle. Both modifications can coexist on the same protein on adjacent residues, and lowering polyglycylation levels increases polyglutamylation, and reciprocally. The precise function of polyglycylation is still unclear. Some glutamate residues at the C-terminus are polyglutamylated, resulting in polyglutamate chains on the gamma-carboxyl group. Polyglutamylation plays a key role in microtubule severing by spastin (SPAST). SPAST preferentially recognizes and acts on microtubules decorated with short polyglutamate tails: severing activity by SPAST increases as the number of glutamates per tubulin rises from one to eight, but decreases beyond this glutamylation threshold. Post-translationally, acetylation of alpha chains at Lys-40 is located inside the microtubule lumen. This modification has been correlated with increased microtubule stability, intracellular transport and ciliary assembly.

The protein resides in the cytoplasm. Its subcellular location is the cytoskeleton. The enzyme catalyses GTP + H2O = GDP + phosphate + H(+). Functionally, tubulin is the major constituent of microtubules, a cylinder consisting of laterally associated linear protofilaments composed of alpha- and beta-tubulin heterodimers. Microtubules grow by the addition of GTP-tubulin dimers to the microtubule end, where a stabilizing cap forms. Below the cap, tubulin dimers are in GDP-bound state, owing to GTPase activity of alpha-tubulin. The protein is Tubulin alpha-5 chain of Gallus gallus (Chicken).